Consider the following 402-residue polypeptide: UDP-N-acetylmuramoylalanine--D-glutamate ligase (402 aa).

97-103 provides a ligand contact to ATP; sequence GTNGKTT.

This sequence belongs to the MurCDEF family.

Its subcellular location is the cytoplasm. It carries out the reaction UDP-N-acetyl-alpha-D-muramoyl-L-alanine + D-glutamate + ATP = UDP-N-acetyl-alpha-D-muramoyl-L-alanyl-D-glutamate + ADP + phosphate + H(+). It participates in cell wall biogenesis; peptidoglycan biosynthesis. Cell wall formation. Catalyzes the addition of glutamate to the nucleotide precursor UDP-N-acetylmuramoyl-L-alanine (UMA). The protein is UDP-N-acetylmuramoylalanine--D-glutamate ligase of Campylobacter jejuni subsp. jejuni serotype O:23/36 (strain 81-176).